The following is a 650-amino-acid chain: Sodium-dependent phosphate transporter 2 (650 aa).

Residues 1–5 (MAMDG) are Extracellular-facing. A helical transmembrane segment spans residues 6–26 (YLWMVILGFIIAFILAFSVGA). The Cytoplasmic portion of the chain corresponds to 27-46 (NDVANSFGTAVGSGVVTLRQ). The chain crosses the membrane as a helical span at residues 47 to 67 (ACILASIFETTGSVLLGAKVG). At 68–83 (ETIRKGIIDVNLYNDT) the chain is on the extracellular side. Asn-81 carries N-linked (GlcNAc...) asparagine glycosylation. The helical transmembrane segment at 84–104 (VVTLMAGEVSAMVGSAVWQLI) threads the bilayer. The Cytoplasmic segment spans residues 105–109 (ASFLR). The chain crosses the membrane as a helical span at residues 110-130 (LPISGTHCIVGSTIGFSLVAN). Residues 131–142 (GTKGVQWMELVK) lie on the Extracellular side of the membrane. The chain crosses the membrane as a helical span at residues 143 to 163 (IVASWFISPLLSGFMSGVLFV). The Cytoplasmic portion of the chain corresponds to 164 to 192 (LIRMFILTKEDPVPNGLQALPLFYAATIA). A helical membrane pass occupies residues 193–212 (INVFSIMYTGAPVLGLSLPI). Trp-213 is a topological domain (extracellular). Residues 214 to 234 (AIALISFGVALLFAFFVWLFV) form a helical membrane-spanning segment. At 235–482 (CPWMRRKIAG…EEKEEKDTAE (248 aa)) the chain is on the cytoplasmic side. 6 positions are modified to phosphoserine: Ser-253, Ser-256, Ser-259, Ser-268, Ser-315, and Ser-384. Positions 268 to 310 (SPFKELPGAKASDDSAVPLTNPTGEAVGPSEGTSTGNHPRTAY) are disordered. The chain crosses the membrane as a helical span at residues 483 to 503 (VHLLFHFLQVLTACFGSFAHG). At 504–530 (GNDVSNAIGPLVALWLIYEQGGVMQEA) the chain is on the extracellular side. Residues 531–551 (ATPVWLLFYGGVGICTGLWVW) traverse the membrane as a helical segment. Residues 552-571 (GRRVIQTMGKDLTPITPSSG) lie on the Cytoplasmic side of the membrane. The helical transmembrane segment at 572-586 (FTIELASAFTVVIAS) threads the bilayer. The Extracellular segment spans residues 587 to 593 (NIGLPVS). A helical membrane pass occupies residues 594–609 (TTHCKVGSVVAVGWIR). Residues 610 to 621 (SRKAVDWHLFRN) are Cytoplasmic-facing. A helical membrane pass occupies residues 622 to 642 (IFVAWFVTVPVAGLFSAAIMA). Residues 643 to 650 (IFMYGILS) are Extracellular-facing.

It belongs to the inorganic phosphate transporter (PiT) (TC 2.A.20) family. In terms of assembly, homodimer.

Its subcellular location is the cell membrane. The protein resides in the apical cell membrane. It carries out the reaction 2 Na(+)(out) + phosphate(out) = 2 Na(+)(in) + phosphate(in). Functionally, sodium-phosphate symporter which preferentially transports the monovalent form of phosphate with a stoichiometry of two sodium ions per phosphate ion. Plays a critical role in the determination of bone quality and strength by providing phosphate for bone mineralization. Required to maintain normal cerebrospinal fluid phosphate levels. Mediates phosphate-induced calcification of vascular smooth muscle cells (VCMCs) and can functionally compensate for loss of SLC20A1 in VCMCs. Its function is as follows. (Microbial infection) Functions as a retroviral receptor and confers hamster cells susceptibility to infection to Gibbon Ape Leukemia Virus (GaLV) and amphotropic murine leukemia virus (A-MuLV). This is Sodium-dependent phosphate transporter 2 (SLC20A2) from Cricetulus griseus (Chinese hamster).